A 535-amino-acid polypeptide reads, in one-letter code: T-complex protein 1 subunit beta (535 aa).

Ala-2 carries the N-acetylalanine modification. Residue Ser-3 is modified to Phosphoserine. N6-acetyllysine is present on Lys-13. ADP is bound at residue Gly-44. Gly-44 contacts ATP. Ser-60 carries the phosphoserine modification. Mg(2+) is bound at residue Asp-97. Positions 98, 99, 100, and 101 each coordinate ADP. 3 residues coordinate ATP: Gly-98, Thr-99, and Thr-100. Lys-154 carries the post-translational modification N6-acetyllysine. ADP contacts are provided by Ser-168 and Ser-169. An N6-acetyllysine modification is found at Lys-181. Residue Lys-248 forms a Glycyl lysine isopeptide (Lys-Gly) (interchain with G-Cter in SUMO2) linkage. Position 260 is a phosphoserine (Ser-260). At Thr-261 the chain carries Phosphothreonine. Residues Gly-410, Glu-495, and Lys-500 each contribute to the ADP site. Positions 495 and 500 each coordinate ATP.

It belongs to the TCP-1 chaperonin family. In terms of assembly, component of the chaperonin-containing T-complex (TRiC), a hexadecamer composed of two identical back-to-back stacked rings enclosing a protein folding chamber. Each ring is made up of eight different subunits: TCP1/CCT1, CCT2, CCT3, CCT4, CCT5, CCT6A/CCT6, CCT7, CCT8. Interacts with PACRG. Interacts with FLCN. Interacts with DLEC1. Interacts with SVEP1.

It localises to the cytoplasm. It carries out the reaction ATP + H2O = ADP + phosphate + H(+). Its function is as follows. Component of the chaperonin-containing T-complex (TRiC), a molecular chaperone complex that assists the folding of actin, tubulin and other proteins upon ATP hydrolysis. The TRiC complex mediates the folding of WRAP53/TCAB1, thereby regulating telomere maintenance. As part of the TRiC complex may play a role in the assembly of BBSome, a complex involved in ciliogenesis regulating transports vesicles to the cilia. The chain is T-complex protein 1 subunit beta (Cct2) from Rattus norvegicus (Rat).